We begin with the raw amino-acid sequence, 439 residues long: DNA primase DnaG (439 aa).

The 75-residue stretch at 169–243 folds into the Toprim domain; sequence DSIIVVEGRA…DIDYVARAPY (75 aa). Mg(2+)-binding residues include Glu-175, Asp-217, and Asp-219.

The protein belongs to the archaeal DnaG primase family. In terms of assembly, forms a ternary complex with MCM helicase and DNA. It depends on Mg(2+) as a cofactor.

The enzyme catalyses ssDNA + n NTP = ssDNA/pppN(pN)n-1 hybrid + (n-1) diphosphate.. Functionally, RNA polymerase that catalyzes the synthesis of short RNA molecules used as primers for DNA polymerase during DNA replication. In Methanococcus maripaludis (strain C7 / ATCC BAA-1331), this protein is DNA primase DnaG.